A 233-amino-acid chain; its full sequence is Cobalt-containing nitrile hydratase subunit beta (233 aa).

It belongs to the nitrile hydratase subunit beta family. Heterotetramer of two alpha and two beta chains.

The catalysed reaction is an aliphatic primary amide = an aliphatic nitrile + H2O. Its function is as follows. NHase catalyzes the hydration of various nitrile compounds to the corresponding amides. This Pseudonocardia thermophila protein is Cobalt-containing nitrile hydratase subunit beta.